The primary structure comprises 266 residues: Translation initiation factor 2 subunit alpha (266 aa).

Residues 10–81 (GELVVGKIDE…SAQQIDLSIK (72 aa)) form the S1 motif domain. The segment at 233-266 (AEDALEESADRAAKVVEQHGGSGQFHRERSEDDE) is disordered. Basic and acidic residues-rich tracts occupy residues 240–249 (SADRAAKVVE) and 257–266 (FHRERSEDDE).

Belongs to the eIF-2-alpha family. As to quaternary structure, heterotrimer composed of an alpha, a beta and a gamma chain.

Its function is as follows. eIF-2 functions in the early steps of protein synthesis by forming a ternary complex with GTP and initiator tRNA. This Haloarcula marismortui (strain ATCC 43049 / DSM 3752 / JCM 8966 / VKM B-1809) (Halobacterium marismortui) protein is Translation initiation factor 2 subunit alpha.